We begin with the raw amino-acid sequence, 243 residues long: Probable 6-oxopurine nucleoside phosphorylase (243 aa).

Phosphate is bound by residues T8 and 48-49 (RH). Residue M174 coordinates substrate. T175 is a binding site for phosphate. 198–200 (NYA) provides a ligand contact to substrate.

This sequence belongs to the PNP/MTAP phosphorylase family. MTAP subfamily. Homohexamer. Dimer of a homotrimer.

It catalyses the reaction a purine D-ribonucleoside + phosphate = a purine nucleobase + alpha-D-ribose 1-phosphate. Its pathway is purine metabolism; purine nucleoside salvage. Purine nucleoside phosphorylase which is highly specific for 6-oxopurine nucleosides. Cleaves guanosine or inosine to respective bases and sugar-1-phosphate molecules. Involved in purine salvage. The chain is Probable 6-oxopurine nucleoside phosphorylase from Archaeoglobus fulgidus (strain ATCC 49558 / DSM 4304 / JCM 9628 / NBRC 100126 / VC-16).